A 117-amino-acid chain; its full sequence is Large ribosomal subunit protein bL20 (117 aa).

Belongs to the bacterial ribosomal protein bL20 family.

Functionally, binds directly to 23S ribosomal RNA and is necessary for the in vitro assembly process of the 50S ribosomal subunit. It is not involved in the protein synthesizing functions of that subunit. This is Large ribosomal subunit protein bL20 from Rickettsia akari (strain Hartford).